The chain runs to 247 residues: Protein GrpE (247 aa).

Disordered regions lie at residues 1–68 (MKKN…KNDD) and 226–247 (PAEKQDEKKAEESEAADKKNEN). Basic and acidic residues-rich tracts occupy residues 7 to 35 (KHADKKEAAKEELEKDLQPKDESAVKDEQ), 43 to 54 (TSKENPQEDKAE), and 228 to 247 (EKQDEKKAEESEAADKKNEN).

It belongs to the GrpE family. As to quaternary structure, homodimer.

The protein resides in the cytoplasm. Its function is as follows. Participates actively in the response to hyperosmotic and heat shock by preventing the aggregation of stress-denatured proteins, in association with DnaK and GrpE. It is the nucleotide exchange factor for DnaK and may function as a thermosensor. Unfolded proteins bind initially to DnaJ; upon interaction with the DnaJ-bound protein, DnaK hydrolyzes its bound ATP, resulting in the formation of a stable complex. GrpE releases ADP from DnaK; ATP binding to DnaK triggers the release of the substrate protein, thus completing the reaction cycle. Several rounds of ATP-dependent interactions between DnaJ, DnaK and GrpE are required for fully efficient folding. The protein is Protein GrpE of Treponema denticola (strain ATCC 35405 / DSM 14222 / CIP 103919 / JCM 8153 / KCTC 15104).